Consider the following 88-residue polypeptide: Putative regulatory protein PCC7424_3427 (88 aa).

This sequence belongs to the RemA family.

In Gloeothece citriformis (strain PCC 7424) (Cyanothece sp. (strain PCC 7424)), this protein is Putative regulatory protein PCC7424_3427.